We begin with the raw amino-acid sequence, 70 residues long: uncharacterized protein (70 aa).

This sequence belongs to the opacity porin family.

This is an uncharacterized protein from Haemophilus influenzae (strain ATCC 51907 / DSM 11121 / KW20 / Rd).